Consider the following 503-residue polypeptide: GMP synthase [glutamine-hydrolyzing] (503 aa).

Residues 1 to 189 (MVLVLDFGSQ…FLELAGVKRD (189 aa)) enclose the Glutamine amidotransferase type-1 domain. The Nucleophile role is filled by Cys78. Catalysis depends on residues His164 and Glu166. Positions 190 to 378 (WTPEHVLEEL…LGLPDTLRLR (189 aa)) constitute a GMPS ATP-PPase domain. 217–223 (SGGVDSS) lines the ATP pocket.

As to quaternary structure, homodimer.

The enzyme catalyses XMP + L-glutamine + ATP + H2O = GMP + L-glutamate + AMP + diphosphate + 2 H(+). The protein operates within purine metabolism; GMP biosynthesis; GMP from XMP (L-Gln route): step 1/1. In terms of biological role, catalyzes the synthesis of GMP from XMP. This is GMP synthase [glutamine-hydrolyzing] from Thermus thermophilus (strain ATCC 27634 / DSM 579 / HB8).